Here is a 288-residue protein sequence, read N- to C-terminus: Diaminopimelate epimerase (288 aa).

Asparagine 14 and asparagine 67 together coordinate substrate. Cysteine 76 acts as the Proton donor in catalysis. Substrate is bound by residues 77-78, asparagine 166, asparagine 199, and 217-218; these read GN and ER. Residue cysteine 226 is the Proton acceptor of the active site. 227-228 contacts substrate; it reads GT.

The protein belongs to the diaminopimelate epimerase family. As to quaternary structure, homodimer.

The protein resides in the cytoplasm. It catalyses the reaction (2S,6S)-2,6-diaminopimelate = meso-2,6-diaminopimelate. Its pathway is amino-acid biosynthesis; L-lysine biosynthesis via DAP pathway; DL-2,6-diaminopimelate from LL-2,6-diaminopimelate: step 1/1. Catalyzes the stereoinversion of LL-2,6-diaminopimelate (L,L-DAP) to meso-diaminopimelate (meso-DAP), a precursor of L-lysine and an essential component of the bacterial peptidoglycan. The polypeptide is Diaminopimelate epimerase (Bacillus cereus (strain AH820)).